Reading from the N-terminus, the 477-residue chain is Glycogen synthase (477 aa).

Position 15 (K15) interacts with ADP-alpha-D-glucose.

Belongs to the glycosyltransferase 1 family. Bacterial/plant glycogen synthase subfamily.

The enzyme catalyses [(1-&gt;4)-alpha-D-glucosyl](n) + ADP-alpha-D-glucose = [(1-&gt;4)-alpha-D-glucosyl](n+1) + ADP + H(+). It participates in glycan biosynthesis; glycogen biosynthesis. Synthesizes alpha-1,4-glucan chains using ADP-glucose. The chain is Glycogen synthase from Halorhodospira halophila (strain DSM 244 / SL1) (Ectothiorhodospira halophila (strain DSM 244 / SL1)).